Consider the following 265-residue polypeptide: TATA-box-binding protein (265 aa).

A disordered region spans residues 1–40; the sequence is MYNPSQAVPVSLHKNQDNQDGGQQRSHYPQISSQQSQSYL. Residues 18-29 are compositionally biased toward polar residues; that stretch reads NQDGGQQRSHYP. 2 tandem repeats follow at residues 91-167 and 181-258.

The protein belongs to the TBP family. Belongs to the TFIID complex together with the TBP-associated factors (TAFs). Binds DNA as monomer.

The protein localises to the nucleus. Its function is as follows. General transcription factor that functions at the core of the DNA-binding multiprotein factor TFIID. Binding of TFIID to the TATA box is the initial transcriptional step of the pre-initiation complex (PIC), playing a role in the activation of eukaryotic genes transcribed by RNA polymerase II. The polypeptide is TATA-box-binding protein (Strongylocentrotus purpuratus (Purple sea urchin)).